We begin with the raw amino-acid sequence, 145 residues long: Anaerobic nitrite reductase NSHB5 (145 aa).

Residues 2–142 (GFSETQEELV…LAAAIKEEMK (141 aa)) form the Globin domain. The short motif at 35 to 39 (EIAPA) is the Homodimerization element. Heme b-binding residues include S45, H59, K61, R84, T88, and H89. The Homodimerization signature appears at 96–108 (DAHFEVVKTALLD).

It belongs to the plant globin family. As to quaternary structure, homodimer. Heme b is required as a cofactor. As to expression, expressed in embryonic (embryos, coleoptiles and seminal roots) and vegetative (leaves and roots) organs.

The protein resides in the cytoplasm. The protein localises to the nucleus. The catalysed reaction is Fe(III)-heme b-[protein] + nitric oxide + H2O = Fe(II)-heme b-[protein] + nitrite + 2 H(+). Functionally, phytoglobin that reduces nitrite to nitric oxide under anoxic conditions (e.g. during flooding or in waterlogged soil). May not function as an oxygen storage or transport protein. Has an unusually high affinity for O(2) through an hexacoordinate heme iron because of a very low dissociation constant. The polypeptide is Anaerobic nitrite reductase NSHB5 (Oryza sativa subsp. indica (Rice)).